Consider the following 35-residue polypeptide: Photosystem II reaction center protein T (35 aa).

The chain crosses the membrane as a helical span at residues 3–23 (ALVYTFLLVGTLGIIFFAIFF).

It belongs to the PsbT family. As to quaternary structure, PSII is composed of 1 copy each of membrane proteins PsbA, PsbB, PsbC, PsbD, PsbE, PsbF, PsbH, PsbI, PsbJ, PsbK, PsbL, PsbM, PsbT, PsbY, PsbZ, Psb30/Ycf12, at least 3 peripheral proteins of the oxygen-evolving complex and a large number of cofactors. It forms dimeric complexes.

The protein localises to the plastid. Its subcellular location is the chloroplast thylakoid membrane. Found at the monomer-monomer interface of the photosystem II (PS II) dimer, plays a role in assembly and dimerization of PSII. PSII is a light-driven water plastoquinone oxidoreductase, using light energy to abstract electrons from H(2)O, generating a proton gradient subsequently used for ATP formation. The chain is Photosystem II reaction center protein T from Staurastrum punctulatum (Green alga).